The chain runs to 198 residues: MNKFATLAVFISVCLAVGSCNYGGQHAGHGYGHHRSISSYGQRGDGSAAAASSAAAAGGNDQRPVEIVAGPRYGGSEQLRPILLDSGYQGGHNEYGRGHGNIGHLVGGGSYGGHIAGGNHGGNYGGHQRGYGRPRWSVQPAGTTLLYPGQNSYRRYASPPEYTKVVLPVRAAPPVAKLYLPENNYGSHGGYHNEGPKY.

A signal peptide spans 1-16; it reads MNKFATLAVFISVCLA.

It belongs to the chorion protein S19 family.

Its subcellular location is the secreted. Its function is as follows. Chorion membrane (egg shell) protein; plays a role in protecting the egg from the environment. This Drosophila virilis (Fruit fly) protein is Chorion protein S19 (Cp19).